An 87-amino-acid polypeptide reads, in one-letter code: Putative defensin-like protein 235 (87 aa).

Positions 1–26 are cleaved as a signal peptide; that stretch reads MRSATFFLVSCVLMSFVLSHVKEVEA. Disulfide bonds link cysteine 46-cysteine 73, cysteine 54-cysteine 82, and cysteine 71-cysteine 84.

The protein belongs to the DEFL family.

It is found in the secreted. This Arabidopsis thaliana (Mouse-ear cress) protein is Putative defensin-like protein 235 (SCRL26).